Reading from the N-terminus, the 510-residue chain is 2,3-bisphosphoglycerate-independent phosphoglycerate mutase (510 aa).

Positions 11 and 61 each coordinate Mn(2+). Residue Ser61 is the Phosphoserine intermediate of the active site. Residues His124, 154–155 (RD), Arg185, Arg191, 260–263 (RPDR), and Lys333 each bind substrate. Mn(2+)-binding residues include Asp398, His402, Asp439, His440, and His457.

The protein belongs to the BPG-independent phosphoglycerate mutase family. As to quaternary structure, monomer. Mn(2+) is required as a cofactor.

The catalysed reaction is (2R)-2-phosphoglycerate = (2R)-3-phosphoglycerate. Its pathway is carbohydrate degradation; glycolysis; pyruvate from D-glyceraldehyde 3-phosphate: step 3/5. In terms of biological role, catalyzes the interconversion of 2-phosphoglycerate and 3-phosphoglycerate. The polypeptide is 2,3-bisphosphoglycerate-independent phosphoglycerate mutase (Mycoplasma mobile (strain ATCC 43663 / 163K / NCTC 11711) (Mesomycoplasma mobile)).